We begin with the raw amino-acid sequence, 447 residues long: SNF1-related protein kinase regulatory subunit gamma-1-like (447 aa).

Ala2 bears the N-acetylalanine mark. Ser35 carries the phosphoserine modification. CBS domains follow at residues 54-120 (QVPG…SAEL), 214-275 (SFRW…GRDW), 292-350 (MSPN…PEVF), and 374-433 (LAIP…PNYF).

This sequence belongs to the 5'-AMP-activated protein kinase gamma subunit family. As to quaternary structure, subunit of a probable heterotrimeric complex consisting of an alpha catalytic (KIN10 or KIN11) subunit, and a beta (KINB) and a gamma (KING or SNF4) non-catalytic regulatory subunits.

In terms of biological role, regulatory subunit of the probable trimeric SNF1-related protein kinase (SnRK) complex, which may play a role in a signal transduction cascade regulating gene expression and carbohydrate metabolism in higher plants. The protein is SNF1-related protein kinase regulatory subunit gamma-1-like (CBSCBS2) of Arabidopsis thaliana (Mouse-ear cress).